The chain runs to 229 residues: Large ribosomal subunit protein uL1 (229 aa).

This sequence belongs to the universal ribosomal protein uL1 family. As to quaternary structure, part of the 50S ribosomal subunit.

In terms of biological role, binds directly to 23S rRNA. The L1 stalk is quite mobile in the ribosome, and is involved in E site tRNA release. Protein L1 is also a translational repressor protein, it controls the translation of the L11 operon by binding to its mRNA. This Histophilus somni (strain 129Pt) (Haemophilus somnus) protein is Large ribosomal subunit protein uL1.